A 925-amino-acid polypeptide reads, in one-letter code: Leucine--tRNA ligase (925 aa).

Positions 40-51 match the 'HIGH' region motif; the sequence is PYPSGAGLHVGH. The 'KMSKS' region motif lies at 700-704; it reads KMSKS. Position 703 (Lys703) interacts with ATP.

The protein belongs to the class-I aminoacyl-tRNA synthetase family.

It localises to the cytoplasm. It catalyses the reaction tRNA(Leu) + L-leucine + ATP = L-leucyl-tRNA(Leu) + AMP + diphosphate. This is Leucine--tRNA ligase from Porphyromonas gingivalis (strain ATCC 33277 / DSM 20709 / CIP 103683 / JCM 12257 / NCTC 11834 / 2561).